A 644-amino-acid polypeptide reads, in one-letter code: Threonine--tRNA ligase (644 aa).

A TGS domain is found at 1–61 (MKVSIEGSVV…TACETLEPVY (61 aa)). The segment at 241-532 (DHRKLGTQLD…LTEHFAGAFP (292 aa)) is catalytic. 3 residues coordinate Zn(2+): Cys333, His384, and His509.

It belongs to the class-II aminoacyl-tRNA synthetase family. Homodimer. It depends on Zn(2+) as a cofactor.

It localises to the cytoplasm. The catalysed reaction is tRNA(Thr) + L-threonine + ATP = L-threonyl-tRNA(Thr) + AMP + diphosphate + H(+). In terms of biological role, catalyzes the attachment of threonine to tRNA(Thr) in a two-step reaction: L-threonine is first activated by ATP to form Thr-AMP and then transferred to the acceptor end of tRNA(Thr). Also edits incorrectly charged L-seryl-tRNA(Thr). This Oleidesulfovibrio alaskensis (strain ATCC BAA-1058 / DSM 17464 / G20) (Desulfovibrio alaskensis) protein is Threonine--tRNA ligase.